A 268-amino-acid chain; its full sequence is Microtubule-associated protein RP/EB family member 1 (268 aa).

Ala2 carries the post-translational modification N-acetylalanine. One can recognise a Calponin-homology (CH) domain in the interval 14–116 (NLSRHDMLAW…FVQWFKKFFD (103 aa)). Lys66 is subject to N6-crotonyllysine. Tyr124 carries the post-translational modification Phosphotyrosine. The tract at residues 124 to 268 (YDPVAARQGQ…GGPQEEQEEY (145 aa)) is interaction with MTUS2/TIP150. Residues 146–180 (LSKPKKPLGSSTAAPQRPIATQRTTAAPKAGPGMV) form a disordered region. A compositionally biased stretch (polar residues) spans 154-170 (GSSTAAPQRPIATQRTT). Phosphoserine is present on Ser155. In terms of domain architecture, EB1 C-terminal spans 185–255 (GVGNGDDEAA…LYATDEGFVI (71 aa)). The tract at residues 206-211 (TVEDLE) is interaction with APC. The segment at 208 to 268 (EDLEKERDFY…GGPQEEQEEY (61 aa)) is DCTN1-binding. Residue Lys220 is modified to N6-acetyllysine. The interval 220–242 (KLRNIELICQENEGENDPVLQRI) is APC-binding. An interaction with SKA1 region spans residues 232–255 (EGENDPVLQRIVDILYATDEGFVI).

It belongs to the MAPRE family. In terms of assembly, homodimer. Heterodimer with MAPRE3. Interacts (via C-terminal residues 206-211) with APC (via C-terminal residues 2674-2845); the interaction inhibits association with and bundling of F-actin. Interacts with DCTN1, DIAPH1 and DIAPH2. Interacts with DCTN2, TERF1 and dynein intermediate chain. Interacts with CLASP2, DST, KIF2C and STIM1; probably required for their targeting to the growing microtubule plus ends. Interacts with MTUS2; interaction is direct and probably targets MTUS2 to microtubules. Interacts (via C-terminus) with SKA1 (via SXIP motif); the interaction is direct and stabilizes the kinetochore-microtubule attachment of the SKA1 complex. Interacts with APC2. Interacts with CLASP1. Interacts (via C-terminus) with CLIP1. Interacts with SLAIN2 and SLAIN1. Interacts with MACF1. Interacts with KIF18B; this interaction is required for efficient accumulation of KIF18B at microtubule plus ends. Interacts with MISP. Interacts with RABL2/RABL2A; binds preferentially to GTP-bound RABL2. Interacts with KCNAB2. Interacts with KNSTRN. Interacts with NCKAP5L. Interacts with AKAP9. Interacts with PDE4DIP isoform 2/MMG8/SMYLE; this interaction is required for its recruitment to the Golgi apparatus. May form a pericentrosomal complex with AKAP9, CDK5RAP2 and PDE4DIP isoform 2/MMG8/SMYLE; within this complex, MAPRE1 binding to CDK5RAP2 may be mediated by PDE4DIP. Contrary to other mammalian species, does not interact with CDK5RAP2, possibly due to the lack of conservation of the MAPRE1-binding motif in mouse CDK5RAP2. Interacts with AKNA. Interacts with GAS2L1, GAS2L2, and GAS2L3. Interacts with RARRES1 and AGBL2. In terms of processing, acetylation at Lys-220 by KAT2B/PCAF promotes dynamic kinetochore-microtubule interactions in early mitosis. Post-translationally, crotonylated by KAT5 during mitosis, promoting astral microtubule plasticity and dynamic connection between astral microtubules and the cortex during mitotic chromosome segregation, thereby ensuring accurate spindle positioning in mitosis. Decrotonylated by HDAC3. Expressed within the midpiece of sperm tail (at protein level).

It is found in the cytoplasm. Its subcellular location is the cytoskeleton. The protein localises to the microtubule organizing center. It localises to the centrosome. The protein resides in the spindle. It is found in the spindle pole. Its function is as follows. Plus-end tracking protein (+TIP) that binds to the plus-end of microtubules and regulates the dynamics of the microtubule cytoskeleton. Recruits other +TIP proteins to microtubules by binding to a conserved Ser-X-Leu-Pro (SXLP) motif in their polypeptide chains. Promotes cytoplasmic microtubule nucleation and elongation. Involved in mitotic spindle positioning by stabilizing microtubules and promoting dynamic connection between astral microtubules and the cortex during mitotic chromosome segregation. Assists chromosome alignment in metaphase by recruiting the SKA complex to the spindle and stabilizing its interactions with microtubule bundles (K-fibers). Also acts as a regulator of minus-end microtubule organization: interacts with the complex formed by AKAP9 and PDE4DIP, leading to recruit CAMSAP2 to the Golgi apparatus, thereby tethering non-centrosomal minus-end microtubules to the Golgi, an important step for polarized cell movement. Promotes elongation of CAMSAP2-decorated microtubule stretches on the minus-end of microtubules. Acts as a regulator of autophagosome transport via interaction with CAMSAP2. Functions downstream of Rho GTPases and DIAPH1 in stable microtubule formation. May play a role in cell migration. The chain is Microtubule-associated protein RP/EB family member 1 (Mapre1) from Mus musculus (Mouse).